Consider the following 301-residue polypeptide: Probable alpha-L-glutamate ligase (301 aa).

Residues 104-287 (LQLLSRRGVG…VAGLIIQYLE (184 aa)) form the ATP-grasp domain. Residues lysine 141, 178–179 (EY), aspartate 187, and 211–213 (RSN) contribute to the ATP site. Mg(2+) contacts are provided by aspartate 248, glutamate 260, and asparagine 262. Mn(2+) is bound by residues aspartate 248, glutamate 260, and asparagine 262.

It belongs to the RimK family. Mg(2+) is required as a cofactor. Mn(2+) serves as cofactor.

The chain is Probable alpha-L-glutamate ligase from Stutzerimonas stutzeri (strain A1501) (Pseudomonas stutzeri).